The following is a 295-amino-acid chain: Tyrosine recombinase XerC (295 aa).

The Core-binding (CB) domain occupies 1–85 (MQNALQKYYD…ALRQFLAYLV (85 aa)). Residues 106 to 285 (YLPKNIDQEQ…DFKHLTDVYD (180 aa)) form the Tyr recombinase domain. Catalysis depends on residues arginine 145, lysine 169, histidine 237, arginine 240, and histidine 263. The active-site O-(3'-phospho-DNA)-tyrosine intermediate is the tyrosine 272.

The protein belongs to the 'phage' integrase family. XerC subfamily. As to quaternary structure, forms a cyclic heterotetrameric complex composed of two molecules of XerC and two molecules of XerD.

The protein localises to the cytoplasm. Its function is as follows. Site-specific tyrosine recombinase, which acts by catalyzing the cutting and rejoining of the recombining DNA molecules. The XerC-XerD complex is essential to convert dimers of the bacterial chromosome into monomers to permit their segregation at cell division. It also contributes to the segregational stability of plasmids. This Actinobacillus succinogenes (strain ATCC 55618 / DSM 22257 / CCUG 43843 / 130Z) protein is Tyrosine recombinase XerC.